The following is a 237-amino-acid chain: Pyrimidine 5'-nucleotidase PynA (237 aa).

The active-site Nucleophile is aspartate 9. Residues aspartate 9, aspartate 11, and aspartate 181 each coordinate Mg(2+). Residue aspartate 11 is the Proton donor of the active site.

The protein belongs to the HAD-like hydrolase superfamily. YjjG family. Homodimer. It depends on Mg(2+) as a cofactor. Mn(2+) serves as cofactor.

The protein resides in the cytoplasm. The catalysed reaction is a ribonucleoside 5'-phosphate + H2O = a ribonucleoside + phosphate. Its function is as follows. Nucleotidase that shows high phosphatase activity toward non-canonical pyrimidine nucleotides and three canonical nucleoside 5'-monophosphates (UMP, dUMP and dTMP), and no activity against IMP, UDP, GMP, AMP, UTP or pNPP. Appears to function as a house-cleaning nucleotidase in vivo, since the general nucleotidase activity of it allows it to protect cells against non-canonical pyrimidine derivatives such as 5-fluoro-2'-deoxyuridine monophosphate (5-FdUMP), and prevents the incorporation of potentially mutagenic nucleotides such as 5-bromo-2'-deoxyuridine (5-BrdU) into DNA. Is strictly specific to pyrimidine substrates with 5'-monophosphates and shows no activity against nucleoside di- and triphosphates. This is Pyrimidine 5'-nucleotidase PynA from Streptococcus pneumoniae (strain ATCC BAA-255 / R6).